We begin with the raw amino-acid sequence, 309 residues long: MIKNKILTATLAVGLIAPLANPFIEISKAENKIEDIGQGAEIIKRTQDITSKRLAITQNIQFDFVKDKKYNKDALVVKMQGFISSRTTYSDLKKYPYIKRMIWPFQYNISLKTKDSNVDLINYLPKNKIDSADVSQKLGYNIGGNFQSAPSIGGSGSFNYSKTISYNQKNYVTEVESQNSKGVKWGVKANSFVTPNGQVSAYDQYLFAQDPTGPAARDYFVPDNQLPPLIQSGFNPSFITTLSHEKGKGDKSEFEITYGRNMDTTYAYVTRHRLAVDRKHDAFKNRNVTVKYEVNWKTHEVKIKSITPK.

The N-terminal stretch at 1–29 (MIKNKILTATLAVGLIAPLANPFIEISKA) is a signal peptide.

The protein belongs to the aerolysin family. In terms of assembly, toxicity requires sequential binding and synergistic association of a class S and a class F component which form heterooligomeric complexes. HlgA (class S) associates with HlgB (class F) thus forming an AB toxin in strains producing both gamma-hemolysins and leukocidins. HlgA and LukF-PV can also form a complex.

It is found in the secreted. Its function is as follows. Toxin that seems to act by forming pores in the membrane of the cell. Has a hemolytic and a leucotoxic activity. This is Gamma-hemolysin component A (hlgA) from Staphylococcus aureus (strain MRSA252).